The sequence spans 141 residues: VLSPADKSNVKAAWGKVGSHAGDYGAEALERMFLSFPTTKTYFPHFDLSHGSAQVKGHGKKVADALTNAVAHVDDMPNALSALSDLHAHKLRVDPVNFKLLSHCLLVTLAAHHPAEFTPAVHASLDKFLASVSTVLTSKYR.

The region spanning 1–141 is the Globin domain; sequence VLSPADKSNV…VSTVLTSKYR (141 aa). At S3 the chain carries Phosphoserine. N6-succinyllysine is present on residues K7 and K11. N6-acetyllysine; alternate is present on K16. K16 carries the N6-succinyllysine; alternate modification. Y24 is subject to Phosphotyrosine. A Phosphoserine modification is found at S35. N6-succinyllysine is present on K40. S49 carries the phosphoserine modification. H58 serves as a coordination point for O2. Residue H87 coordinates heme b. The residue at position 102 (S102) is a Phosphoserine. The residue at position 108 (T108) is a Phosphothreonine. S124 and S131 each carry phosphoserine. 2 positions are modified to phosphothreonine: T134 and T137. The residue at position 138 (S138) is a Phosphoserine.

It belongs to the globin family. As to quaternary structure, heterotetramer of two alpha chains and two beta chains. In terms of tissue distribution, red blood cells.

Functionally, involved in oxygen transport from the lung to the various peripheral tissues. In terms of biological role, hemopressin acts as an antagonist peptide of the cannabinoid receptor CNR1. Hemopressin-binding efficiently blocks cannabinoid receptor CNR1 and subsequent signaling. The chain is Hemoglobin subunit alpha (HBA) from Mico argentatus (Silvery marmoset).